A 312-amino-acid polypeptide reads, in one-letter code: Malate dehydrogenase (312 aa).

Residues Gly7–Gly13 and Asp34 contribute to the NAD(+) site. Substrate-binding residues include Arg81 and Arg87. NAD(+) contacts are provided by residues Asn94 and Ile117–Asn119. The substrate site is built by Asn119 and Arg153. His177 acts as the Proton acceptor in catalysis. Met227 provides a ligand contact to NAD(+).

This sequence belongs to the LDH/MDH superfamily. MDH type 1 family. Homodimer.

The catalysed reaction is (S)-malate + NAD(+) = oxaloacetate + NADH + H(+). In terms of biological role, catalyzes the reversible oxidation of malate to oxaloacetate. The polypeptide is Malate dehydrogenase (Edwardsiella ictaluri (strain 93-146)).